The chain runs to 397 residues: Riboflavin biosynthesis protein RibBA (397 aa).

A DHBP synthase region spans residues 1-199; sequence MFHRIEEALE…IEDLIAYRRH (199 aa). D-ribulose 5-phosphate is bound by residues 26 to 27, D31, 138 to 142, and E162; these read RE and RAGHT. Position 27 (E27) interacts with Mg(2+). Position 141 (H141) interacts with Mg(2+). A GTP cyclohydrolase II region spans residues 200–397; that stretch reads HETLVTREVE…ASKLGHLLNL (198 aa). 250–254 serves as a coordination point for GTP; that stretch reads RVHSE. Residues C255, C266, and C268 each contribute to the Zn(2+) site. Residues Q271, 293–295, and T315 contribute to the GTP site; that span reads EGR. Catalysis depends on D327, which acts as the Proton acceptor; for GTP cyclohydrolase activity. R329 serves as the catalytic Nucleophile; for GTP cyclohydrolase activity. GTP-binding residues include T350 and K355.

The protein in the N-terminal section; belongs to the DHBP synthase family. It in the C-terminal section; belongs to the GTP cyclohydrolase II family. Mg(2+) serves as cofactor. It depends on Mn(2+) as a cofactor. Zn(2+) is required as a cofactor.

The enzyme catalyses D-ribulose 5-phosphate = (2S)-2-hydroxy-3-oxobutyl phosphate + formate + H(+). It carries out the reaction GTP + 4 H2O = 2,5-diamino-6-hydroxy-4-(5-phosphoribosylamino)-pyrimidine + formate + 2 phosphate + 3 H(+). It participates in cofactor biosynthesis; riboflavin biosynthesis; 2-hydroxy-3-oxobutyl phosphate from D-ribulose 5-phosphate: step 1/1. The protein operates within cofactor biosynthesis; riboflavin biosynthesis; 5-amino-6-(D-ribitylamino)uracil from GTP: step 1/4. Its function is as follows. Catalyzes the conversion of D-ribulose 5-phosphate to formate and 3,4-dihydroxy-2-butanone 4-phosphate. Catalyzes the conversion of GTP to 2,5-diamino-6-ribosylamino-4(3H)-pyrimidinone 5'-phosphate (DARP), formate and pyrophosphate. The polypeptide is Riboflavin biosynthesis protein RibBA (Bacillus mycoides (strain KBAB4) (Bacillus weihenstephanensis)).